The primary structure comprises 1158 residues: ATP-dependent helicase/deoxyribonuclease subunit B (1158 aa).

This sequence belongs to the helicase family. AddB/RexB type 2 subfamily. In terms of assembly, heterodimer of AddA and RexB. Mg(2+) serves as cofactor.

The heterodimer acts as both an ATP-dependent DNA helicase and an ATP-dependent, dual-direction single-stranded exonuclease. Recognizes the chi site generating a DNA molecule suitable for the initiation of homologous recombination. This subunit has 5' -&gt; 3' nuclease activity but not helicase activity. The chain is ATP-dependent helicase/deoxyribonuclease subunit B from Lactobacillus johnsonii (strain CNCM I-12250 / La1 / NCC 533).